We begin with the raw amino-acid sequence, 403 residues long: RILP-like protein 1 (403 aa).

Phosphoserine is present on S7. An RH1 domain is found at 10-97 (AAESALEKNV…RLERMDRIEK (88 aa)). C47 bears the S-nitrosocysteine mark. A coiled-coil region spans residues 76-258 (ELDELRLELD…KLRERLQGEH (183 aa)). Disordered stretches follow at residues 254–275 (LQGE…GEES), 327–352 (EMEE…PESG), and 384–403 (ANTH…LQHL). S259 bears the Phosphoserine mark. The span at 262–275 (GEEEPETEPVGEES) shows a compositional bias: acidic residues. An RH2 domain is found at 291–356 (RPRFTLQELR…PQPESGIKRL (66 aa)). Polar residues predominate over residues 394-403 (EQGQEALQHL).

The protein belongs to the RILPL family. In terms of assembly, interacts (when S-nitrosylated) with GAPDH. Interacts with RAB8A; interaction is dependent on the phosphorylation of 'Thr-72' of RAB8A. Interacts with RAB10 and RAB12; the interaction is dependent on the phosphorylation of 'Thr-73' of RAB10, and 'Ser-105' of RAB12. S-nitrosylation is required for the interaction with GAPDH. As to expression, widely expressed. Expressed at lower level in liver and kidney.

The protein localises to the cytoplasm. Its subcellular location is the cytosol. It is found in the cytoskeleton. It localises to the microtubule organizing center. The protein resides in the centrosome. The protein localises to the centriole. Its subcellular location is the cilium basal body. Plays a role in the regulation of cell shape and polarity. Plays a role in cellular protein transport, including protein transport away from primary cilia. Neuroprotective protein, which acts by sequestring GAPDH in the cytosol and prevent the apoptotic function of GAPDH in the nucleus. Competes with SIAH1 for binding GAPDH. Does not regulate lysosomal morphology and distribution. Binds to RAB10 following LRRK2-mediated RAB10 phosphorylation which leads to inhibition of ciliogenesis. The sequence is that of RILP-like protein 1 (RILPL1) from Homo sapiens (Human).